We begin with the raw amino-acid sequence, 257 residues long: Deoxyribose-phosphate aldolase (257 aa).

Aspartate 102 serves as the catalytic Proton donor/acceptor. The active-site Schiff-base intermediate with acetaldehyde is lysine 166. The Proton donor/acceptor role is filled by lysine 198.

Belongs to the DeoC/FbaB aldolase family. DeoC type 2 subfamily.

The protein localises to the cytoplasm. The catalysed reaction is 2-deoxy-D-ribose 5-phosphate = D-glyceraldehyde 3-phosphate + acetaldehyde. The protein operates within carbohydrate degradation; 2-deoxy-D-ribose 1-phosphate degradation; D-glyceraldehyde 3-phosphate and acetaldehyde from 2-deoxy-alpha-D-ribose 1-phosphate: step 2/2. In terms of biological role, catalyzes a reversible aldol reaction between acetaldehyde and D-glyceraldehyde 3-phosphate to generate 2-deoxy-D-ribose 5-phosphate. The chain is Deoxyribose-phosphate aldolase from Shewanella sediminis (strain HAW-EB3).